Here is a 195-residue protein sequence, read N- to C-terminus: Transcription repressor OFP17 (195 aa).

An OVATE domain is found at 130-190 (EDNAVEDACR…SRFYGELCRD (61 aa)).

The protein resides in the nucleus. Functionally, transcriptional repressor that may regulate multiple aspects of plant growth and development through the regulation of BEL1-LIKE (BLH) and KNOX TALE (KNAT) homeodomain transcription factors. This is Transcription repressor OFP17 (OFP17) from Arabidopsis thaliana (Mouse-ear cress).